Consider the following 287-residue polypeptide: ATP synthase gamma chain (287 aa).

Belongs to the ATPase gamma chain family. In terms of assembly, F-type ATPases have 2 components, CF(1) - the catalytic core - and CF(0) - the membrane proton channel. CF(1) has five subunits: alpha(3), beta(3), gamma(1), delta(1), epsilon(1). CF(0) has three main subunits: a, b and c.

It is found in the cell inner membrane. In terms of biological role, produces ATP from ADP in the presence of a proton gradient across the membrane. The gamma chain is believed to be important in regulating ATPase activity and the flow of protons through the CF(0) complex. The chain is ATP synthase gamma chain from Stenotrophomonas maltophilia (strain R551-3).